We begin with the raw amino-acid sequence, 320 residues long: MLAKSPLKIVLCSPRGFCAGVVRAIDTVERALALYGAPVYVRHEIVHNKYVVDSLRAKGAIFVEELEEIPDTKAPVVFSAHGVPKSVPEHALSRNFFSIDATCPLVTKVHREAAIHFKRGREILLIGHSHHPEVVGTLGQLPAGAVTLIETAADAEAYQPKDPNNLAFVTQTTLSIDDTAGIVTVLRERFPNISGPHKEDICYATTNRQAAVKKVAPVVDAMIVVGAPNSSNSQRLREVAEREGCKVAVLVQRASDLDWSQFEGIKVLGLTAGASAPEVIVEEIMGAFAERFDLSVETVSAAEENEFFPVPRVLRPDAAE.

C18 contributes to the [4Fe-4S] cluster binding site. Residues H47 and H81 each coordinate (2E)-4-hydroxy-3-methylbut-2-enyl diphosphate. Dimethylallyl diphosphate-binding residues include H47 and H81. Isopentenyl diphosphate contacts are provided by H47 and H81. C103 is a [4Fe-4S] cluster binding site. H131 contributes to the (2E)-4-hydroxy-3-methylbut-2-enyl diphosphate binding site. H131 serves as a coordination point for dimethylallyl diphosphate. Position 131 (H131) interacts with isopentenyl diphosphate. E133 (proton donor) is an active-site residue. T172 is a binding site for (2E)-4-hydroxy-3-methylbut-2-enyl diphosphate. Position 202 (C202) interacts with [4Fe-4S] cluster. 4 residues coordinate (2E)-4-hydroxy-3-methylbut-2-enyl diphosphate: S230, S231, N232, and S275. Residues S230, S231, N232, and S275 each contribute to the dimethylallyl diphosphate site. Isopentenyl diphosphate is bound by residues S230, S231, N232, and S275.

Belongs to the IspH family. [4Fe-4S] cluster is required as a cofactor.

The catalysed reaction is isopentenyl diphosphate + 2 oxidized [2Fe-2S]-[ferredoxin] + H2O = (2E)-4-hydroxy-3-methylbut-2-enyl diphosphate + 2 reduced [2Fe-2S]-[ferredoxin] + 2 H(+). It carries out the reaction dimethylallyl diphosphate + 2 oxidized [2Fe-2S]-[ferredoxin] + H2O = (2E)-4-hydroxy-3-methylbut-2-enyl diphosphate + 2 reduced [2Fe-2S]-[ferredoxin] + 2 H(+). It participates in isoprenoid biosynthesis; dimethylallyl diphosphate biosynthesis; dimethylallyl diphosphate from (2E)-4-hydroxy-3-methylbutenyl diphosphate: step 1/1. Its pathway is isoprenoid biosynthesis; isopentenyl diphosphate biosynthesis via DXP pathway; isopentenyl diphosphate from 1-deoxy-D-xylulose 5-phosphate: step 6/6. Functionally, catalyzes the conversion of 1-hydroxy-2-methyl-2-(E)-butenyl 4-diphosphate (HMBPP) into a mixture of isopentenyl diphosphate (IPP) and dimethylallyl diphosphate (DMAPP). Acts in the terminal step of the DOXP/MEP pathway for isoprenoid precursor biosynthesis. This chain is 4-hydroxy-3-methylbut-2-enyl diphosphate reductase 2, found in Rhodopseudomonas palustris (strain ATCC BAA-98 / CGA009).